Reading from the N-terminus, the 414-residue chain is uncharacterized protein (414 aa).

Belongs to the UbiH/COQ6 family. It depends on FAD as a cofactor.

This is an uncharacterized protein from Synechocystis sp. (strain ATCC 27184 / PCC 6803 / Kazusa).